Consider the following 139-residue polypeptide: PTGSGVVGLSMAGSSALILAAYHPDQFVYSGSLSALLDPSQGMGPSLIGLAMGDAGGYKASDMWGPKDDPAWARNDPMLQVGKLVANNTRIWVYCGNGKPSDLGGDNLPAKFLEGFVRTSNMKFQAAYNAAGGHNAVWN.

The Nucleophile role is filled by serine 10. Residues serine 10 and aspartate 38 each contribute to the substrate site. The active site involves glutamate 114. Substrate contacts are provided by residues 116-119 (FVRT) and lysine 123.

Belongs to the mycobacterial A85 antigen family. As to quaternary structure, homodimer.

It localises to the secreted. The protein resides in the cell wall. It is found in the cytoplasm. It carries out the reaction an acyl-CoA + a 1,2-diacyl-sn-glycerol = a triacyl-sn-glycerol + CoA. The enzyme catalyses 2 alpha,alpha'-trehalose 6-mycolate = alpha,alpha'-trehalose 6,6'-bismycolate + alpha,alpha-trehalose. The antigen 85 proteins (FbpA, FbpB, FbpC) are responsible for the high affinity of mycobacteria for fibronectin, a large adhesive glycoprotein, which facilitates the attachment of M.tuberculosis to murine alveolar macrophages (AMs). They also help to maintain the integrity of the cell wall by catalyzing the transfer of mycolic acids to cell wall arabinogalactan, and through the synthesis of alpha,alpha-trehalose dimycolate (TDM, cord factor). They catalyze the transfer of a mycoloyl residue from one molecule of alpha,alpha-trehalose monomycolate (TMM) to another TMM, leading to the formation of TDM. FbpA mediates triacylglycerol (TAG) formation with long-chain acyl-CoA as the acyl donor and 1,2-dipalmitoyl-sn-glycerol (1,2-dipalmitin) as the acyl acceptor. It has a preference for C26:0-CoA over C18:1-CoA. This chain is Diacylglycerol acyltransferase/mycolyltransferase Ag85A (fbpA), found in Mycobacterium marinum.